The primary structure comprises 301 residues: Recombination-associated protein RdgC (301 aa).

Belongs to the RdgC family.

It is found in the cytoplasm. The protein localises to the nucleoid. Its function is as follows. May be involved in recombination. The sequence is that of Recombination-associated protein RdgC from Pseudoalteromonas atlantica (strain T6c / ATCC BAA-1087).